The chain runs to 312 residues: Glyoxylate/hydroxypyruvate reductase A (312 aa).

Arg-227 is a catalytic residue. His-275 serves as the catalytic Proton donor.

The protein belongs to the D-isomer specific 2-hydroxyacid dehydrogenase family. GhrA subfamily.

It is found in the cytoplasm. It catalyses the reaction glycolate + NADP(+) = glyoxylate + NADPH + H(+). It carries out the reaction (R)-glycerate + NAD(+) = 3-hydroxypyruvate + NADH + H(+). The catalysed reaction is (R)-glycerate + NADP(+) = 3-hydroxypyruvate + NADPH + H(+). Its function is as follows. Catalyzes the NADPH-dependent reduction of glyoxylate and hydroxypyruvate into glycolate and glycerate, respectively. The chain is Glyoxylate/hydroxypyruvate reductase A from Klebsiella pneumoniae (strain 342).